Here is a 1413-residue protein sequence, read N- to C-terminus: VSIFIFHFSANILVRNSEMKGKRVISKREMSKADQCTFLSYQSVAYGTLGDVAGDVSSIEGADLVATPIAAGGHLAKGATDAAMIAMDCSSIPFDEIKQQLNQRFNEVDKKLQKGAEALENVTELAEKTYSSVEKMRVEMREGFNHVIATIENANTKQIITGINQIIQYFNDERENINNRQKEDYVAKLQEPASGNFLLYLRKSRTSEDGSLHSLLFKIINQELAIPNNAADNNAIRALFALFYGTQTFISIMFYLVKQYSYLADYHYQNGNLAEFNSNFDHMKTVFQDFKFTLIGINTSNSKPLVNTVLSIIEDVKNKRFIRNLRSNLYQKIIKSTKSLLDLREKITKMDLPIIEDTPKSSVLINFREKSSSVPRIETPILKWTPGTVVKYAIQYEQDGKYSKISKWSNPITVQRLANPYITIDKDRRNRLVFRQFGNEKPELISILDSSQNEFRDIHRDLYNAAQMPYKETALGICRKLIDSGAQVGASFEMGRKSIHASATAGNDDVARLLLAKNNGLLNVPDKNGYTPLHIASERKNNDFVKFLLEKGADVNVRTFANELTPLHLAARQDFTIIVKTLMEKRGIDVNAKERAGFTPLHLSITSNSRAARTLINETPAGINIKSNSGLTPLHLAVLQNNLSAAKVLVKSNKKVKLNEMDNNGMTPLHYASMLGNLEFVKYFTSEQGIDVNAKTKVKNWTPLHLAILFKKFDVAQSLLQVRNIDISTRADQAITPLHLAAATGNSQIVKTILNSGAVVDQETANGFTALHLAIMNPNTETPQFLIAKGANINAKTNDGSTPLHFAAALGKTNIFQLLMDKGANIKAENLINQMPIHEAVVNGHLAIVKMLIEQDSSLMNAKNMRDEYPFYLAAEKRYKDVFNYLESKGADVNEKNNDGNTLLHLFSINGEVEVVQFLIQNGADFRLRNKERKSFFDLAVEFGHAGIVGYAIEENKVDLQEPYRGKTILYHAICDSVKYDRIEVVRYFVETLNEDQCSPLQEAAAYAHLDLVKYFVQERGINPTAFNNDNQVSPLCIAIVGAPCGFVKSCDTPERLDVVEYLVDKTPDINKECDTQQSTPVSSAVYGNKVSILNYLIRNGADPNKKVRGDPPLFIAAMIGQYDIVKSLVEQHKIDVNTRNKEQFTPLHAAASNDHIDVVKYLIQKGADVNAKGDENLKPIDLAGEKSKAYLRSLGRRFFRNESPSKSFEIDKFNAIMPEVSMSGKVSHDSNFIQHISSGTRSKSNFNSAKNKMYAENSHVRSIDVNGALLLLDFMVRVFSNRKMNYAASISGIKSRSNSEAQAEALILTERFEHLLNALIADQSIDSLDFSNVHSRIYKAIINGNPNGISEMLCSYAKEYSELDPEKIEKLLQEFETLTFTKSSEIQINEKFSHALFETCGLNRPTNVLQIK.

The propeptide occupies 1 to 28 (VSIFIFHFSANILVRNSEMKGKRVISKR). A helix H8 is the probable transmembrane region of the tetrameric pore inserted in the target cell membrane region spans residues 238 to 257 (ALFALFYGTQTFISIMFYLV). ANK repeat units follow at residues 457-490 (DIHR…QVGA), 494-524 (MGRK…LLNV), 528-557 (NGYT…DVNV), 562-592 (NELT…DVNA), 596-625 (AGFT…GINI), 629-658 (SGLT…KVKL), 664-694 (NGMT…DVNA), 699-729 (KNWT…DIST), 733-762 (QAIT…VVDQ), 766-795 (NGFT…NINA), 799-828 (DGST…NIKA), 832-861 (INQM…SLMN), 866-895 (RDEY…DVNE), 899-928 (DGNT…DFRL), 965-995 (RGKT…TLNE), 996-1026 (DQCS…NPTA), 1031-1072 (NQVS…DINK), 1077-1106 (QQST…DPNK), 1109-1139 (RGDP…DVNT), and 1143-1172 (EQFT…DVNA). A propeptide spanning residues 1193–1413 (RSLGRRFFRN…NRPTNVLQIK (221 aa)) is cleaved from the precursor.

The protein belongs to the cationic peptide 01 (latrotoxin) family. 01 (alpha-latrocrustotoxin) subfamily. In terms of assembly, homotetramer in membranes. Expressed by the venom gland.

The protein resides in the secreted. Its subcellular location is the target cell membrane. Functionally, crustacean-selective presynaptic neurotoxin that induces neurotransmitter exocytosis. May bind to crustacean neurexin-1 homolog, adhesion G protein-coupled receptor L1 homolog, and receptor-type tyrosine-protein phosphatase S homolog, and induces neurotransmitter exocytosis both by forming tetrameric pores in membranes and signaling via G protein-coupled receptor. This recombinant protein form channels in artificial membrane bilayers, that are stabilized by calcium ions and allow calcium flux at negative membrane potentials. The sequence is that of Alpha-latrocrustotoxin-Lt1a from Latrodectus tredecimguttatus (Mediterranean black widow spider).